A 432-amino-acid chain; its full sequence is 5'-deoxyadenosine deaminase (432 aa).

H63 and H65 together coordinate Zn(2+). Substrate contacts are provided by E92 and H184. Zn(2+) is bound at residue H211. The substrate site is built by E214 and D299. D299 is a Zn(2+) binding site.

The protein belongs to the metallo-dependent hydrolases superfamily. MTA/SAH deaminase family. As to quaternary structure, homotetramer. Zn(2+) serves as cofactor.

The catalysed reaction is 5'-deoxyadenosine + H2O + H(+) = 5'-deoxyinosine + NH4(+). The enzyme catalyses S-adenosyl-L-homocysteine + H2O + H(+) = S-inosyl-L-homocysteine + NH4(+). It carries out the reaction S-methyl-5'-thioadenosine + H2O + H(+) = S-methyl-5'-thioinosine + NH4(+). It catalyses the reaction adenosine + H2O + H(+) = inosine + NH4(+). The protein operates within amino-acid biosynthesis; S-adenosyl-L-methionine biosynthesis. In terms of biological role, catalyzes the deamination of three SAM-derived enzymatic products, namely 5'-deoxyadenosine, S-adenosyl-L-homocysteine, and 5'-methylthioadenosine, to produce the inosine analogs. Can also deaminate adenosine. The preferred substrate for this enzyme is 5'-deoxyadenosine, but all these substrates are efficiently deaminated. Likely functions in a S-adenosyl-L-methionine (SAM) recycling pathway from S-adenosyl-L-homocysteine (SAH) produced from SAM-dependent methylation reactions. May also be involved in the recycling of 5'-deoxyadenosine, whereupon the 5'-deoxyribose moiety of 5'-deoxyinosine is further metabolized to deoxyhexoses used for the biosynthesis of aromatic amino acids in methanogens. This is 5'-deoxyadenosine deaminase from Methanosarcina mazei (strain ATCC BAA-159 / DSM 3647 / Goe1 / Go1 / JCM 11833 / OCM 88) (Methanosarcina frisia).